The primary structure comprises 422 residues: Synaptotagmin-1 (422 aa).

At 1–57 the chain is on the vesicular side; it reads MVSESHHEALAAPPVTTVATVLPHNATEPASPGEGKEDAFSKLKEKFMNELHKIPLP. A glycan (N-linked (GlcNAc...) asparagine) is linked at Asn-25. The chain crosses the membrane as a helical span at residues 58-80; it reads PWALIAIAIVAVLLVLTCCFCIC. 5 S-palmitoyl cysteine lipidation sites follow: Cys-75, Cys-76, Cys-78, Cys-80, and Cys-83. Residues 81 to 422 are Cytoplasmic-facing; sequence KKCLFKKKNK…EVDAMLAVKK (342 aa). Residues 113–142 form a disordered region; the sequence is TMKDQALKDDDAETGLTDGEEKEEPKEEEK. Acidic residues predominate over residues 122 to 134; the sequence is DDAETGLTDGEEK. Thr-129 bears the Phosphothreonine mark. Residues 136-382 are phospholipid binding; it reads EPKEEEKLGK…AIGKVFVGYN (247 aa). Residues 142-261 enclose the C2 1 domain; the sequence is KLGKLQYSLD…DFGHVTEEWR (120 aa). Positions 172, 173, and 179 each coordinate Ca(2+). Tyr-230 is subject to Phosphotyrosine. Residues Asp-231, Phe-232, Asp-233, Ser-236, Lys-237, and Asp-239 each contribute to the Ca(2+) site. Ser-265 is modified (phosphoserine). The C2 2 domain maps to 273-406; the sequence is KLGDICFSLR…NPRRPIAQWH (134 aa). Ca(2+) contacts are provided by Asp-304 and Asp-310. Residues Ser-343 and Ser-345 each carry the phosphoserine modification. The Ca(2+) site is built by Asp-364, Asp-366, and Asp-372.

It belongs to the synaptotagmin family. In terms of assembly, homotetramer. Heterodimer; heterodimerizes with SYT2 in presence of calcium. Interacts with SCAMP5. Interacts with STON2. Forms a complex with SV2B, syntaxin 1 and SNAP25. Interacts with SV2A, SV2B and SV2C. Interacts with RIMS1. Interacts with PRRT2. Interacts with DNAJC5 in a phosphorylation-dependent manner. Interacts (via N-terminus) with RAB3A. Interacts with SYT12. Interacts with calmodulin. Interacts with DNM1 (via C-terminal proline-rich domain (PRD)); this interaction facilitates vesicle fission during clathrin-mediated endocytosis (CME). Ca(2+) serves as cofactor. Post-translationally, glycosylated.

It is found in the cytoplasmic vesicle. It localises to the secretory vesicle membrane. Its subcellular location is the secretory vesicle. The protein localises to the synaptic vesicle membrane. The protein resides in the chromaffin granule membrane. It is found in the cytoplasm. Its function is as follows. Calcium sensor that participates in triggering neurotransmitter release at the synapse. May have a regulatory role in the membrane interactions during trafficking of synaptic vesicles at the active zone of the synapse. It binds acidic phospholipids with a specificity that requires the presence of both an acidic head group and a diacyl backbone. A Ca(2+)-dependent interaction between synaptotagmin and putative receptors for activated protein kinase C has also been reported. It can bind to at least three additional proteins in a Ca(2+)-independent manner; these are neurexins, syntaxin and AP2. Plays a role in dendrite formation by melanocytes. The protein is Synaptotagmin-1 of Bos taurus (Bovine).